Reading from the N-terminus, the 549-residue chain is MTIKSMRRAYQVVKTVLQYGLDDLIPAKLKPWYFRLLRWSFFWLTNQHKDKVGGERLKLAMQELGPVYIKFGQMLSTRRDLLSDEWAEELAMLQDRVPPFDSAIARAQIEAELGAPIETYFDNFDDTPLASASISQVHTATLKSNGEEVVLKVLRPNVEEKVHADLLLMTQSAQVLETLLGHGNRLRPAEVVEDYRTTIEGELNLKLEALNAIKLRNNFIDSGALYIPKMYEEFCFTRLIVMERIYGVPVSDRAALEAQGTNLKLLAERGVELFFTQVFRDNFFHADMHPGNIFVSTEHPEDPFYIGLDCGIMGTLTEQDKRYLAENFLAFFNRDYTRIAQLYIESGWVAADTDLVAFEQAIKVVCEPMFNKPLDEISFGHVLLELFRTARRFDMVVQPQLVLLEKTLLYIEGLGRQLYPQLDLWQTAKPFLESWMAEQMGPLGMAKKIKKQFPYWTDKLPELPELVYDNLKMGKNFVNSQNQLLDRYLKQQQKAHKSNYLLITSAVLVICGSILFSQNATLWASYACIGIGATLWLLGWRSRPKNRKF.

In terms of domain architecture, Protein kinase spans 123–501 (NFDDTPLASA…QQKAHKSNYL (379 aa)). ATP-binding positions include 129-137 (LASASISQV) and Lys-152. Asp-287 serves as the catalytic Proton acceptor. A run of 2 helical transmembrane segments spans residues 498–518 (SNYLLITSAVLVICGSILFSQ) and 520–540 (ATLWASYACIGIGATLWLLGW).

The protein belongs to the ABC1 family. UbiB subfamily.

The protein localises to the cell inner membrane. It participates in cofactor biosynthesis; ubiquinone biosynthesis [regulation]. Is probably a protein kinase regulator of UbiI activity which is involved in aerobic coenzyme Q (ubiquinone) biosynthesis. This is Probable protein kinase UbiB from Shewanella loihica (strain ATCC BAA-1088 / PV-4).